We begin with the raw amino-acid sequence, 354 residues long: Envelope protein US28 (354 aa).

Residues 1–37 are Extracellular-facing; it reads MTPTTTTAELTTEFDYDEDATPCVFTDVLNQSKPVTL. An N-linked (GlcNAc...) asparagine; by host glycan is attached at N30. A helical transmembrane segment spans residues 38–58; that stretch reads FLYGVVFLFGSIGNFLVIFTI. Topologically, residues 59-69 are cytoplasmic; it reads TWRRRIQCSGD. Residues 70-90 form a helical membrane-spanning segment; the sequence is VYFINLAAADLLFVCTLPLWM. Topologically, residues 91–101 are extracellular; that stretch reads QYLLDHNSLAS. The chain crosses the membrane as a helical span at residues 102 to 122; sequence VPCTLLTACFYVAMFASLCFI. The Cytoplasmic segment spans residues 123 to 145; that stretch reads TEIALDRYYAIVYMRYRPVKQAC. A helical membrane pass occupies residues 146 to 166; it reads LFSIFWWIFAVIIAIPHFMVV. Residues 167-183 are Extracellular-facing; the sequence is TKKDNQCMTDYDYLEVS. Residues 184–204 form a helical membrane-spanning segment; sequence YPIILNVELMLGAFVIPLSVI. Topologically, residues 205–228 are cytoplasmic; it reads SYCYYRISRIVAVSQSRHKGRIVR. A helical transmembrane segment spans residues 229-249; that stretch reads VLIAVVLVFIIFWLPYHLTLF. Over 250–273 the chain is Extracellular; sequence VDTLKLLKWISSSCEFERSLKRAL. The chain crosses the membrane as a helical span at residues 274-294; sequence ILTESLAFCHCCLNPLLYVFV. At 295–354 the chain is on the cytoplasmic side; that stretch reads GTKFRQELHCLLAEFRQRLFSRDVSWYHSMSFSRRGSPSRRETSSDTLSDEVCRVSQIIP.

Belongs to the G-protein coupled receptor 1 family. Interacts with host GPRASP1; this interaction targets US28 to lysosomes for degradation. Interacts with host CX3CL1/Fractalkine (via N-terminus). In terms of processing, phosphorylated. High phosphorylation occurs concomitantly with receptor endocytosis and correlate with low receptor presence at the plasma membrane.

Its subcellular location is the host cell membrane. Functionally, receptor for a C-C type chemokine. Binds to a great number of different CC-chemokines including CCL5/RANTES, CCL2/MCP-1, CCL3/MIP-1-alpha as well as CX3CL1/Fractalkine. Transduces signals resulting in the activation of MAP kinase signaling pathways and augmentation of intracellular calcium ion levels, leading to alterations in chemotactic behavior of vascular smooth muscle cells and macrophages. The US28 receptor also exhibits high levels of agonist-independent signaling activity and agonist-independent endocytosis. Interacts with the host Gi complex without activating it, thereby probably interfering with the chemokine-Gi signaling. May also function as a G protein sink to sequester G protein from the cell surface via internalization. Interacts with endogenous Gaq/11 subunits and thereby constitutively activates phospholipase C. The polypeptide is Envelope protein US28 (US28) (Human cytomegalovirus (strain Merlin) (HHV-5)).